Here is a 195-residue protein sequence, read N- to C-terminus: Auxin-responsive protein IAA14 (195 aa).

Disordered regions lie at residues 1–61 (MAAE…SPAS) and 85–107 (STAA…NKGG). The EAR-like (transcriptional repression) motif lies at 10 to 14 (LRLGL). The 84-residue stretch at 108-191 (GLYVKVSMDG…SCKKLRIMRG (84 aa)) folds into the PB1 domain.

It belongs to the Aux/IAA family. Homodimers and heterodimers. As to expression, highly expressed in flowers. Expressed in etiolated seedlings.

The protein localises to the nucleus. In terms of biological role, aux/IAA proteins are short-lived transcriptional factors that function as repressors of early auxin response genes at low auxin concentrations. This chain is Auxin-responsive protein IAA14 (IAA14), found in Oryza sativa subsp. japonica (Rice).